A 198-amino-acid chain; its full sequence is Recombination protein RecR (198 aa).

The C4-type zinc finger occupies 57–72; it reads CSVCGHITENDPCYIC. The Toprim domain occupies 80-175; the sequence is SVICVVEDDK…KVTRLAQGLS (96 aa).

This sequence belongs to the RecR family.

Functionally, may play a role in DNA repair. It seems to be involved in an RecBC-independent recombinational process of DNA repair. It may act with RecF and RecO. The chain is Recombination protein RecR from Staphylococcus aureus (strain JH1).